A 717-amino-acid chain; its full sequence is Pre-mRNA-splicing factor ATP-dependent RNA helicase DEAH10 (717 aa).

The tract at residues 1 to 29 is disordered; the sequence is MPSMAQGELKSFVQNSRPNPKSPTVSPFS. Positions 12–29 are enriched in polar residues; that stretch reads FVQNSRPNPKSPTVSPFS. Residues 51-256 form the Helicase ATP-binding domain; it reads VEEVQKNDIL…FGGAKAVHVQ (206 aa). 64 to 71 contacts ATP; the sequence is GETGSGKT. Positions 162–165 match the DEAH box motif; it reads DEAH. Positions 278 to 453 constitute a Helicase C-terminal domain; sequence TLVTIFQIHF…NIILQLKALG (176 aa).

Belongs to the DEAD box helicase family. DEAH subfamily. PRP22 sub-subfamily. As to expression, widely expressed but spatially and temporally regulated during development.

It is found in the nucleus. The protein resides in the nucleolus. It carries out the reaction ATP + H2O = ADP + phosphate + H(+). Its function is as follows. Involved in pre-mRNA splicing. Plays a role during development in processes such as meristem maintenance, leaf morphogenesis and root morphogenesis. The protein is Pre-mRNA-splicing factor ATP-dependent RNA helicase DEAH10 of Arabidopsis thaliana (Mouse-ear cress).